A 303-amino-acid polypeptide reads, in one-letter code: ATP-dependent (S)-NAD(P)H-hydrate dehydratase (303 aa).

One can recognise a YjeF C-terminal domain in the interval 12–299; the sequence is QQQLVCSVIP…AEVRTAFSML (288 aa). Residues glycine 106 and 158–164 each bind (6S)-NADPHX; that span reads NAVELDR. Residues 194–198 and 213–222 each bind ATP; these read KGSED and GSPRRCGGQG. Residue aspartate 223 participates in (6S)-NADPHX binding.

It belongs to the NnrD/CARKD family. Mg(2+) serves as cofactor.

The enzyme catalyses (6S)-NADHX + ATP = ADP + phosphate + NADH + H(+). It catalyses the reaction (6S)-NADPHX + ATP = ADP + phosphate + NADPH + H(+). Its function is as follows. Catalyzes the dehydration of the S-form of NAD(P)HX at the expense of ATP, which is converted to ADP. Together with NAD(P)HX epimerase, which catalyzes the epimerization of the S- and R-forms, the enzyme allows the repair of both epimers of NAD(P)HX, a damaged form of NAD(P)H that is a result of enzymatic or heat-dependent hydration. The polypeptide is ATP-dependent (S)-NAD(P)H-hydrate dehydratase (Ixodes scapularis (Black-legged tick)).